The primary structure comprises 403 residues: SEC14-like protein 2 (403 aa).

Residue lysine 51 is modified to N6-succinyllysine. A CRAL-TRIO domain is found at 76 to 249 (PPEVIQQYLS…EYGGTMTDPD (174 aa)). N6-succinyllysine is present on residues lysine 253 and lysine 257. The GOLD domain maps to 275-383 (KQQYEHSVQI…AKKVNFTVEV (109 aa)). The residue at position 393 (lysine 393) is an N6-succinyllysine.

As to quaternary structure, monomer. Widely expressed. Strong expression in liver, brain and prostate.

It is found in the cytoplasm. The protein resides in the nucleus. Carrier protein. Binds to some hydrophobic molecules and promotes their transfer between the different cellular sites. Binds with high affinity to alpha-tocopherol. Also binds with a weaker affinity to other tocopherols and to tocotrienols. May have a transcriptional activatory activity via its association with alpha-tocopherol. Probably recognizes and binds some squalene structure, suggesting that it may regulate cholesterol biosynthesis by increasing the transfer of squalene to a metabolic active pool in the cell. The polypeptide is SEC14-like protein 2 (SEC14L2) (Homo sapiens (Human)).